A 462-amino-acid chain; its full sequence is Siroheme synthase (462 aa).

The interval Met-1–Leu-201 is precorrin-2 dehydrogenase /sirohydrochlorin ferrochelatase. NAD(+)-binding positions include Glu-22–Val-23 and Pro-43–Glu-44. Ser-126 bears the Phosphoserine mark. Residues Gly-214–Leu-462 are uroporphyrinogen-III C-methyltransferase. Position 223 (Pro-223) interacts with S-adenosyl-L-methionine. Asp-246 functions as the Proton acceptor in the catalytic mechanism. The active-site Proton donor is Lys-268. S-adenosyl-L-methionine is bound by residues Gly-299–Asp-301, Ile-304, Thr-329–Ala-330, Met-381, and Gly-410.

This sequence in the N-terminal section; belongs to the precorrin-2 dehydrogenase / sirohydrochlorin ferrochelatase family. In the C-terminal section; belongs to the precorrin methyltransferase family.

It catalyses the reaction uroporphyrinogen III + 2 S-adenosyl-L-methionine = precorrin-2 + 2 S-adenosyl-L-homocysteine + H(+). The catalysed reaction is precorrin-2 + NAD(+) = sirohydrochlorin + NADH + 2 H(+). The enzyme catalyses siroheme + 2 H(+) = sirohydrochlorin + Fe(2+). The protein operates within cofactor biosynthesis; adenosylcobalamin biosynthesis; precorrin-2 from uroporphyrinogen III: step 1/1. It participates in cofactor biosynthesis; adenosylcobalamin biosynthesis; sirohydrochlorin from precorrin-2: step 1/1. It functions in the pathway porphyrin-containing compound metabolism; siroheme biosynthesis; precorrin-2 from uroporphyrinogen III: step 1/1. Its pathway is porphyrin-containing compound metabolism; siroheme biosynthesis; siroheme from sirohydrochlorin: step 1/1. The protein operates within porphyrin-containing compound metabolism; siroheme biosynthesis; sirohydrochlorin from precorrin-2: step 1/1. In terms of biological role, multifunctional enzyme that catalyzes the SAM-dependent methylations of uroporphyrinogen III at position C-2 and C-7 to form precorrin-2 via precorrin-1. Then it catalyzes the NAD-dependent ring dehydrogenation of precorrin-2 to yield sirohydrochlorin. Finally, it catalyzes the ferrochelation of sirohydrochlorin to yield siroheme. This chain is Siroheme synthase, found in Ectopseudomonas mendocina (strain ymp) (Pseudomonas mendocina).